We begin with the raw amino-acid sequence, 344 residues long: Arginine N-succinyltransferase (344 aa).

L125 lines the succinyl-CoA pocket. The Proton donor role is filled by H229.

Belongs to the arginine N-succinyltransferase family.

It catalyses the reaction succinyl-CoA + L-arginine = N(2)-succinyl-L-arginine + CoA + H(+). It participates in amino-acid degradation; L-arginine degradation via AST pathway; L-glutamate and succinate from L-arginine: step 1/5. Catalyzes the transfer of succinyl-CoA to arginine to produce N(2)-succinylarginine. This is Arginine N-succinyltransferase from Shigella boydii serotype 4 (strain Sb227).